The sequence spans 316 residues: Glucan endo-1,3-beta-glucosidase GV (316 aa).

The active-site Proton donor is the Glu99. Glu239 (nucleophile) is an active-site residue.

Belongs to the glycosyl hydrolase 17 family.

The protein resides in the cytoplasm. The catalysed reaction is Hydrolysis of (1-&gt;3)-beta-D-glucosidic linkages in (1-&gt;3)-beta-D-glucans.. May provide a degree of protection against microbial invasion of germinated barley grain through its ability to degrade fungal cell wall polysaccharides. This Hordeum vulgare (Barley) protein is Glucan endo-1,3-beta-glucosidase GV.